The sequence spans 336 residues: Fructose-1,6-bisphosphatase class 1 (336 aa).

Mg(2+)-binding residues include E90, D112, L114, and D115. Substrate-binding positions include 115 to 118 (DGSS), N211, and K277. A Mg(2+)-binding site is contributed by E283.

The protein belongs to the FBPase class 1 family. As to quaternary structure, homotetramer. It depends on Mg(2+) as a cofactor.

The protein resides in the cytoplasm. It carries out the reaction beta-D-fructose 1,6-bisphosphate + H2O = beta-D-fructose 6-phosphate + phosphate. It functions in the pathway carbohydrate biosynthesis; gluconeogenesis. In Pseudomonas fluorescens (strain SBW25), this protein is Fructose-1,6-bisphosphatase class 1.